Consider the following 833-residue polypeptide: Histone deacetylase HDA1 (833 aa).

Over residues 1 to 13 (MSTGQEEHLDSKL) the composition is skewed to basic and acidic residues. 2 disordered regions span residues 1-40 (MSTGQEEHLDSKLENQISEEENQSQNQNFPTAIEDSIQAS) and 760-791 (NGNGNGNNGNSSNGGGNKSADSNGHDDFSKRP). The stretch at 5–52 (QEEHLDSKLENQISEEENQSQNQNFPTAIEDSIQASIEKLDEVDDEIN) forms a coiled coil. Residues 760-776 (NGNGNGNNGNSSNGGGN) show a composition bias toward gly residues.

This sequence belongs to the histone deacetylase family. HD type 2 subfamily. Interacts with BRG1.

Its subcellular location is the nucleus. The enzyme catalyses N(6)-acetyl-L-lysyl-[histone] + H2O = L-lysyl-[histone] + acetate. In terms of biological role, responsible for the deacetylation of lysine residues on the N-terminal part of the core histones (H2A, H2B, H3 and H4). Histone deacetylation gives a tag for epigenetic repression and plays an important role in transcriptional regulation, cell cycle progression and developmental events. Histone deacetylases act via the formation of large multiprotein complexes. Deacetylates the YNG2 subunit of NuA4 histone acetyltransferase (HAT) module, leading to the reduction of YNG2 and NuA4 HAT at the promoters of hypha-specific genes. Plays a key role in the regulation of filamentous growth and virulence. Involved in the switch between two heritable states, the white and opaque states. These two cell types differ in many characteristics, including cell structure, mating competence, and virulence. Each state is heritable for many generations, and switching between states occurs stochastically at low frequency. This chain is Histone deacetylase HDA1 (HDA1), found in Candida albicans (strain SC5314 / ATCC MYA-2876) (Yeast).